A 365-amino-acid polypeptide reads, in one-letter code: tRNA N6-adenosine threonylcarbamoyltransferase (365 aa).

Fe cation is bound by residues His111 and His115. Substrate-binding positions include Ile140 to Gly144, Asp173, Gly186, and Asn298. Asp323 provides a ligand contact to Fe cation.

This sequence belongs to the KAE1 / TsaD family. It depends on Fe(2+) as a cofactor.

It localises to the cytoplasm. It carries out the reaction L-threonylcarbamoyladenylate + adenosine(37) in tRNA = N(6)-L-threonylcarbamoyladenosine(37) in tRNA + AMP + H(+). Its function is as follows. Required for the formation of a threonylcarbamoyl group on adenosine at position 37 (t(6)A37) in tRNAs that read codons beginning with adenine. Is involved in the transfer of the threonylcarbamoyl moiety of threonylcarbamoyl-AMP (TC-AMP) to the N6 group of A37, together with TsaE and TsaB. TsaD likely plays a direct catalytic role in this reaction. The chain is tRNA N6-adenosine threonylcarbamoyltransferase from Thermomicrobium roseum (strain ATCC 27502 / DSM 5159 / P-2).